The chain runs to 3004 residues: MKETDKIKSEVLNLMQLDGKREHINKNNKLYRKVIINPTSEDDLQKFCKNYFRIYQFSLYNFIRRLISLDAVIVYTLFMTVYIFSEISQGITKKYLFVDTAISLFLNIGILVVIESLFELKLLKDIKNANSQHYLRIVPKMSYFEKVMTKDIKVGNIIRVFQGEEFPADVVILYSKKNTNAVVDSFKIDGLYNKSIKYPVEKYKIDRDYLKMLSEINGVIKCELPNKNVFCFQGTYKLDKHPRSLHLSYENFALQSSILKGAEYIDGVVVYTGADTKKNLNIPRKIEENMTFCIKMNNVVYYLIFMYILFVLLSIIIKAIFYRKGKLLENSNDTFFTVLEDFIGLYILVLPVMLYSEKSLIYIIQSLKIERDTRMNKDENSNNTKVFNKNKNDALGTVDIIATARNGVLVNKKEILVSCTINNVLYSKKKFIISDEFLKLPSLNILDAERTNVSELLNLDERIFKDPENIFFPSRDFNNFLKILGNNTNPIYDPINGDFSKILKEIYRNYLNEEFLYKKIKLSSSVKSLLDNGYNQFLEDCESSYDCKEIIEDGLKNNEQSEKIEEFILGICACNRIIIYNEKFGDIEMKDNINEKSTSEHMNYDKDREVENIESENKYAVDSDGEENMNTIEHEDICLFNTSKNIGFHIYCYKKCLFFYNLKNICKEYYIICFHDFLRSNNYTMCILKNKKELDKGILYIRGYDFNILPYLCKNKNDINKIKKTIKIHTANYLKVILICKKNITNEDIAKYIYLKSVRSKFSFKFFDIIKTFFLYDLECIGIIGLKNDLNDGVVETFNDINNFDIRSWIFTNDSSKNTYLTALQCNLITPNSNLFIINFLNPDHSDEETVANYLFNNFLFSMENMKSRSYAIAINEMSLKNIMRSRYALKVFLCIIMRATVVLFCKLNNETKGKIISKFLSYTTPKLTVLGVGSTLNDAYLLKNTTISVCLTLNKQVNALYSISDYAMEEFKYVGELLILGRLNRFSLCRAFLWIIYLKVMIGSFYFFHNFDNFFSGSSISSILYSQTAFAIFHYSLIVAFASYEIDIPYKFIRNFPYIYQLARRKYFLNNTIIFLNIVESIFSSFISYYILRGNLFNLITHRKFTFHIFVLNFFLISEKILLFSKTWHIFFFIMTIIIVSILFIYINIYTLVDCLITGKCEFSLFDPEDSYFWISLLPILYINFIIDKFMKFVKNKIYPDITYHLSNTLKIETQEKFATNNKREEVITDKNIEKLAPVPKSYIIKEDNAYYGKSKKNKYIFDTLRKIIDIKIKYRNQQLNLEYKTYEKRNKLKLRIIILLLFIIFLITFTIQIIISKFIEKKLHSLSYLTVIYYIVAVLYLIKILIRNKTNYTYFYIIGKLLLVIGYLLEISENSVNNIINMLVTYSFTVCYIFFISFKILEGLVMCIIILSIAIWVYYHKNNNLNAMCTDFCDNPYTSLDNLEYINISCICKQQIFTFLICTLSFTLICLFMKYYEIYYLKKKFLTRYKQKVNLGKQIEILHTMLPSFLVEYLLVSDPKADGIMVGKNISGEDRGIISVIFCDIDDFQTMVSTLEPHTLVQTLDNLYLYFDKCIKYFNCIKIETVFESYLAASGLSEKKNNCVHKIKYDTKCAIKMAIAQLSAKYYISYKVLDTLSNNKDSNSIFPIESKYIYKNISLRIGIHTGKAISGVIGSVKPQYSLFGDTVNTASRMKSTSLKDHIHVSYDTYKYLKDDKTLVWKERSIFIKGKGEMKTYLLVDILDNSKKDHTKALEESTSSIFRSNDEIVNKSELITKEKEFDKIEMPDKSEIIDETKKIFKKSEKPSTKKKKIKKENAKEKNINIKMKEMGEILNNYDKEKVYNCNKSDDGSNSIGQNDFLYSTKNYNYKKSKYLDLERLSTNKSFRRNVLAYNFESPINLPPKIGDNTKRNYDSDNFFTSPYIIDKNEKDEIRDTTNKALYIKKSKNIINRMREDSIDFKDEFSKENDKIKEYIKERITYRQKVTPNYFNFNNMSKYSNAFKKKKKKKKDIQKKYTYRQKTSFYNFLNKNDIINYNYSSEFEYFIDPKMKNKKPINFNNLFAKIYKKKLSLLNIKNEPINIKKKNIKNKSRDRIIFSSRRDEEHDDNQKMNKKLFSRTYAQKAEQTSHENIFTEMINDNFLKKEDKEQCEIRNENRCPTVFLIKRNKTTININKNRVLKRIFKDIITRKKIKRNRILKNKKLNYVNKNDNLGKKYEILNNICLVHKRAMTFVQYNTEDEEKKRTKRFHKNDEIFGSDMNISRNLNGSNSNIQNINRRSKNKAEDDLFIRNKVNLNNIKNNINLRKNIYKTDERGMQYNDLKGYDKKKNTEENNEDKEKKIEYDSNENIKNGFPKNEDKMIMKKRMISKRISFYSLKEYEKGDSFKSYDNSSCGIKSKKTNSIISDEEMNEYFNYNTEFNSNRNKNKQNKEFSLASKVNNIFKNIFKKNYISDKLKSGKYNTMSNSKSGQTNITTDNKKSQIKKNGDVNKANTNVSNKNSDFVTNFDNYNKNILKKLTSTLQINRKTSYFNRFYYKFKDEELEEEYTREYYQEIINIDLTKKLIIIFVISELILSLCNVIELSYYENKETPNDFIVIIWLIRSIYLFTITFIWLLLKTKLKEYKDNSSKMMWTTFILNIFLSSWGIIMIDLACIHYSNLVGNSRERSIFFMKDATELIISMQLIFVKNMLFKHKFFFFVFFFVFLMYSFFKLFVIHVCELRICCSILLILSINILYFWYSEYLDRTQYIIKRKRNRMERTSHDFLTRILPRQVLEEYQNDNLQLTYKHEKIAFLFADIVGFTKWSKTAAPKNVLKLLQKLISKIDKDTIKLGLYKLFTIGDAYVATSQPNASITDQTEAADGIISIFKLAKLILHNINTIKIQFNKHDFNMRIGLHYGSCVGGIIGSVRIRYDMWGLDVLIANHIESNGIPGEIVCSEQFKNFFLENEPHAKLNFWHYKTISINDKDIKIYVVEDKNYEEDYDPKIINYETLLKLREQNKVKG.

The Cytoplasmic portion of the chain corresponds to Met1–Leu66. The chain crosses the membrane as a helical span at residues Ile67–Ile87. Residues Ser88–Lys94 are Extracellular-facing. The helical transmembrane segment at Tyr95–Glu115 threads the bilayer. The Cytoplasmic segment spans residues Ser116–Val300. A helical transmembrane segment spans residues Tyr301–Phe321. At Tyr322 to Thr334 the chain is on the extracellular side. Asn332 carries N-linked (GlcNAc...) asparagine glycosylation. A helical transmembrane segment spans residues Phe335–Tyr355. The Cytoplasmic portion of the chain corresponds to Ser356–Arg991. The chain crosses the membrane as a helical span at residues Ala992–Phe1012. Residues Asp1013–Ser1022 are Extracellular-facing. A helical transmembrane segment spans residues Ser1023 to Ala1043. Topologically, residues Ser1044 to Asn1072 are cytoplasmic. Residues Thr1073–Leu1093 traverse the membrane as a helical segment. Residues Arg1094–Lys1105 are Extracellular-facing. Residues Phe1106–Ser1126 form a helical membrane-spanning segment. The Cytoplasmic portion of the chain corresponds to Lys1127–His1130. A helical transmembrane segment spans residues Ile1131–Tyr1151. The Extracellular portion of the chain corresponds to Thr1152–Asp1171. The chain crosses the membrane as a helical span at residues Ser1172–Met1192. At Lys1193–Arg1297 the chain is on the cytoplasmic side. A helical membrane pass occupies residues Ile1298–Ser1318. Topologically, residues Lys1319–Ser1327 are extracellular. The helical transmembrane segment at Leu1328–Ile1348 threads the bilayer. Residues Arg1349–Asn1353 are Cytoplasmic-facing. The helical transmembrane segment at Tyr1354–Ser1374 threads the bilayer. Residues Glu1375–Tyr1394 are Extracellular-facing. The chain crosses the membrane as a helical span at residues Ile1395–Ile1415. Residues Ala1416 to Gln1457 are Cytoplasmic-facing. The chain crosses the membrane as a helical span at residues Ile1458–Tyr1478. Topologically, residues Glu1479–Gln1500 are extracellular. Residues Ile1501 to Pro1521 form a helical membrane-spanning segment. At Lys1522–Lys2563 the chain is on the cytoplasmic side. In terms of domain architecture, Guanylate cyclase 1 spans Ser1541–Lys1696. Polar residues predominate over residues Thr2463 to Thr2476. The segment at Thr2463–Lys2491 is disordered. Over residues Asp2477 to Asp2488 the composition is skewed to basic and acidic residues. Residues Leu2564–Ser2584 form a helical membrane-spanning segment. The Extracellular segment spans residues Tyr2585–Asp2594. The chain crosses the membrane as a helical span at residues Phe2595 to Leu2615. The Cytoplasmic portion of the chain corresponds to Leu2616–Thr2634. A helical membrane pass occupies residues Thr2635 to Ile2655. The Extracellular portion of the chain corresponds to His2656 to Arg2667. The helical transmembrane segment at Ser2668–Lys2688 threads the bilayer. Over Asn2689–Lys2695 the chain is Cytoplasmic. The chain crosses the membrane as a helical span at residues Phe2696–Ile2716. At His2717–Arg2722 the chain is on the extracellular side. A helical transmembrane segment spans residues Ile2723 to Tyr2743. The Cytoplasmic segment spans residues Leu2744–Gly3004. A Guanylate cyclase 2 domain is found at Ala2793 to Glu2927. Positions 2798, 2799, and 2842 each coordinate Mg(2+).

In the N-terminal section; belongs to the cation transport ATPase (P-type) (TC 3.A.3) family. Type IV subfamily. This sequence in the C-terminal section; belongs to the adenylyl cyclase class-4/guanylyl cyclase family. Requires Mg(2+) as cofactor. Mn(2+) serves as cofactor.

The protein localises to the membrane. It catalyses the reaction GTP = 3',5'-cyclic GMP + diphosphate. Its function is as follows. Catalyzes the synthesis of the second messenger cGMP from GTP. Probably by regulating cGMP production, required for ookinete gliding motility, which is necessary for the ookinete to traverse the midgut epithelium of the mosquito. In Plasmodium berghei (strain Anka), this protein is Guanylate cyclase beta.